We begin with the raw amino-acid sequence, 371 residues long: Protein-glutamate methylesterase/protein-glutamine glutaminase 3 (371 aa).

Residues arginine 5–aspartate 120 form the Response regulatory domain. Aspartate 56 bears the 4-aspartylphosphate mark. Residues proline 174–glutamine 362 form the CheB-type methylesterase domain. Catalysis depends on residues serine 186, histidine 213, and aspartate 309.

The protein belongs to the CheB family. In terms of processing, phosphorylated by CheA. Phosphorylation of the N-terminal regulatory domain activates the methylesterase activity.

The protein resides in the cytoplasm. The enzyme catalyses [protein]-L-glutamate 5-O-methyl ester + H2O = L-glutamyl-[protein] + methanol + H(+). It catalyses the reaction L-glutaminyl-[protein] + H2O = L-glutamyl-[protein] + NH4(+). Its function is as follows. Involved in chemotaxis. Part of a chemotaxis signal transduction system that modulates chemotaxis in response to various stimuli. Catalyzes the demethylation of specific methylglutamate residues introduced into the chemoreceptors (methyl-accepting chemotaxis proteins or MCP) by CheR. Also mediates the irreversible deamidation of specific glutamine residues to glutamic acid. The polypeptide is Protein-glutamate methylesterase/protein-glutamine glutaminase 3 (Geobacter sulfurreducens (strain ATCC 51573 / DSM 12127 / PCA)).